We begin with the raw amino-acid sequence, 141 residues long: Large ribosomal subunit protein bL17 (141 aa).

The protein belongs to the bacterial ribosomal protein bL17 family. As to quaternary structure, part of the 50S ribosomal subunit. Contacts protein L32.

In Rhizobium meliloti (strain 1021) (Ensifer meliloti), this protein is Large ribosomal subunit protein bL17.